A 351-amino-acid polypeptide reads, in one-letter code: 2-Hydroxyacid oxidase 2 (351 aa).

One can recognise an FMN hydroxy acid dehydrogenase domain in the interval 2–351; it reads SLVCLTDFQA…NRNLVQFSRL (350 aa). Residues 77 to 79, Ser-106, and Gln-128 each bind FMN; that span reads PTG. An a 2-oxocarboxylate-binding site is contributed by Tyr-130. Thr-156 provides a ligand contact to FMN. Arg-165 contributes to the a 2-oxocarboxylate binding site. Thr-178 carries the post-translational modification Phosphothreonine. An FMN-binding site is contributed by Lys-222. His-246 (proton acceptor) is an active-site residue. Arg-249 serves as a coordination point for a 2-oxocarboxylate. FMN is bound by residues 277-281 and 300-301; these read DGGVR and GR. The Microbody targeting signal motif lies at 349 to 351; the sequence is SRL.

This sequence belongs to the FMN-dependent alpha-hydroxy acid dehydrogenase family. Homotetramer. FMN serves as cofactor. As to expression, expressed in the liver and kidney.

It is found in the peroxisome. It carries out the reaction a (2S)-2-hydroxycarboxylate + O2 = a 2-oxocarboxylate + H2O2. The enzyme catalyses 2-hydroxyhexadecanoate + O2 = 2-oxohexadecanoate + H2O2. It catalyses the reaction 2-hydroxyoctanoate + O2 = 2-oxooctanoate + H2O2. The protein operates within lipid metabolism; fatty acid metabolism. In terms of biological role, oxidase that catalyzes the oxidation of medium and long chain hydroxyacids such as 2-hydroxyhexadecanoate and 2-hydroxyoctanoate, to the correspondong 2-oxoacids. Its role in the oxidation of 2-hydroxy fatty acids may contribute to the general pathway of fatty acid alpha-oxidation. Active in vitro with the artificial electron acceptor 2,6-dichlorophenolindophenol (DCIP), but O2 is believed to be the physiological electron acceptor, leading to the production of H2O2. Is not active on glycolate, glyoxylate, L-lactate and 2-hydroxybutanoate. The polypeptide is 2-Hydroxyacid oxidase 2 (HAO2) (Homo sapiens (Human)).